A 394-amino-acid polypeptide reads, in one-letter code: Elongation factor Tu, mitochondrial (394 aa).

Residues 10-204 (KPHCNIGTIG…AVDNYIPQPE (195 aa)) form the tr-type G domain. The segment at 19-26 (GHVDHGKT) is G1. A GTP-binding site is contributed by 19 to 26 (GHVDHGKT). The interval 60–64 (GITIS) is G2. Positions 81-84 (DCPG) are G3. GTP contacts are provided by residues 81-85 (DCPGH) and 136-139 (NKVD). The tract at residues 136–139 (NKVD) is G4. The segment at 174-176 (SAL) is G5.

It belongs to the TRAFAC class translation factor GTPase superfamily. Classic translation factor GTPase family. EF-Tu/EF-1A subfamily.

It localises to the mitochondrion. This protein promotes the GTP-dependent binding of aminoacyl-tRNA to the A-site of ribosomes during protein biosynthesis. This Reclinomonas americana protein is Elongation factor Tu, mitochondrial (TUFA).